The sequence spans 751 residues: Glutamate carboxypeptidase 2 (751 aa).

The Cytoplasmic segment spans residues 1 to 19; sequence MWNPLHETDSTSVAWRRPR. Phosphoserine is present on serine 10. Residues 20–43 form a helical; Signal-anchor for type II membrane protein membrane-spanning segment; it reads WLCAGALVLAAGLFVLGFLFGWFI. The Extracellular portion of the chain corresponds to 44–750; that stretch reads KSPNEAANIS…QAAAGTLREV (707 aa). N-linked (GlcNAc...) asparagine glycans are attached at residues asparagine 51, asparagine 77, asparagine 122, asparagine 141, asparagine 154, and asparagine 196. 2 residues coordinate substrate: arginine 211 and asparagine 258. Ca(2+) contacts are provided by threonine 270 and tyrosine 273. Residues 275 to 588 form an NAALADase region; it reads ANEYAYRLQI…QVRGGIVFEL (314 aa). Asparagine 337 is a glycosylation site (N-linked (GlcNAc...) asparagine). Zn(2+) contacts are provided by histidine 378 and aspartate 388. Residue glutamate 425 participates in substrate binding. Catalysis depends on glutamate 425, which acts as the Nucleophile; for NAALADase activity. Glutamate 426 provides a ligand contact to Zn(2+). Glutamate 434 and glutamate 437 together coordinate Ca(2+). Aspartate 454 contacts Zn(2+). N-linked (GlcNAc...) asparagine glycans are attached at residues asparagine 460 and asparagine 477. Residues 518–519, asparagine 520, 535–537, tyrosine 553, and 553–554 contribute to the substrate site; these read SG, RAR, and YH. Histidine 554 contributes to the Zn(2+) binding site. Asparagine 614 carries an N-linked (GlcNAc...) asparagine glycan. Serine 629 acts as the Charge relay system in catalysis. N-linked (GlcNAc...) asparagine glycosylation is found at asparagine 639 and asparagine 646. Active-site charge relay system residues include aspartate 667 and histidine 690. 700 to 701 contributes to the substrate binding site; it reads KY.

It belongs to the peptidase M28 family. M28B subfamily. In terms of assembly, homodimer. It depends on Zn(2+) as a cofactor. In terms of tissue distribution, high expression in the duodenum and in the jejunum brush-border membrane. Weak expression in kidney.

It is found in the cell membrane. It carries out the reaction Release of an unsubstituted, C-terminal glutamyl residue, typically from Ac-Asp-Glu or folylpoly-gamma-glutamates.. Its activity is regulated as follows. The NAALADase activity is inhibited by quisqualic acid, beta-NAAG and 2-(phosphonomethyl) pentanedioic acid (PMPA). Ethanol ingestion decreases the folate hydrolase activity by 50%. Its function is as follows. Has both folate hydrolase and N-acetylated-alpha-linked-acidic dipeptidase (NAALADase) activity. Has a preference for tri-alpha-glutamate peptides. In the intestine, required for the uptake of folate. In the brain, modulates excitatory neurotransmission through the hydrolysis of the neuropeptide, N-aceylaspartylglutamate (NAAG), thereby releasing glutamate. In terms of biological role, also exhibits a dipeptidyl-peptidase IV type activity. In vitro, cleaves Gly-Pro-AMC. The sequence is that of Glutamate carboxypeptidase 2 (FOLH1) from Sus scrofa (Pig).